A 165-amino-acid chain; its full sequence is MPPSLRKAVAAAIGGGAIAIASVLITGPSGNDGLEGVSYIPYKDIVGVWTVCHGHTGKDIMLGKTYTKAECKALLNKDLATVARQINPYIKVDIPETTRGPLYSFVYNVGAGNFRTSTLLRKINQGDIKGACDQLRRWTYAGGKQWKGLMTRREIEREVCLWGQQ.

Residues 8–28 (AVAAAIGGGAIAIASVLITGP) form a helical; Signal-anchor for type II membrane protein membrane-spanning segment. Catalysis depends on proton donor/acceptor residues glutamate 35 and aspartate 44.

It belongs to the glycosyl hydrolase 24 family.

The protein localises to the host cell inner membrane. The catalysed reaction is Hydrolysis of (1-&gt;4)-beta-linkages between N-acetylmuramic acid and N-acetyl-D-glucosamine residues in a peptidoglycan and between N-acetyl-D-glucosamine residues in chitodextrins.. Its function is as follows. Signal-arrest-release (SAR) endolysin with lysozyme activity that degrades host peptidoglycans and participates with the pinholin and spanin proteins in the sequential events which lead to programmed host cell lysis releasing the mature viral particles. Once the pinholin has permeabilized the host cell membrane, the SAR-endolysin is released into the periplasm where it breaks down the peptidoglycan layer. In Enterobacteria phage PA-2 (Bacteriophage PA-2), this protein is SAR-endolysin (15).